The sequence spans 152 residues: Lipoprotein signal peptidase (152 aa).

A run of 3 helical transmembrane segments spans residues 5–25 (LFVL…FWIV), 61–81 (WFFV…LATH), and 84–104 (LNIW…GNFI). Active-site residues include Asp-114 and Asp-130. The chain crosses the membrane as a helical span at residues 125-145 (IFNVADSYLTVGVILLVICLW).

It belongs to the peptidase A8 family.

Its subcellular location is the cell membrane. The catalysed reaction is Release of signal peptides from bacterial membrane prolipoproteins. Hydrolyzes -Xaa-Yaa-Zaa-|-(S,diacylglyceryl)Cys-, in which Xaa is hydrophobic (preferably Leu), and Yaa (Ala or Ser) and Zaa (Gly or Ala) have small, neutral side chains.. It functions in the pathway protein modification; lipoprotein biosynthesis (signal peptide cleavage). This protein specifically catalyzes the removal of signal peptides from prolipoproteins. In Streptococcus pyogenes serotype M6 (strain ATCC BAA-946 / MGAS10394), this protein is Lipoprotein signal peptidase.